Consider the following 337-residue polypeptide: tRNA N6-adenosine threonylcarbamoyltransferase (337 aa).

Fe cation-binding residues include His-111 and His-115. Residues 134–138 (LVSGG), Asp-167, Gly-180, and Asn-272 each bind substrate. Position 300 (Asp-300) interacts with Fe cation.

Belongs to the KAE1 / TsaD family. It depends on Fe(2+) as a cofactor.

Its subcellular location is the cytoplasm. It carries out the reaction L-threonylcarbamoyladenylate + adenosine(37) in tRNA = N(6)-L-threonylcarbamoyladenosine(37) in tRNA + AMP + H(+). Functionally, required for the formation of a threonylcarbamoyl group on adenosine at position 37 (t(6)A37) in tRNAs that read codons beginning with adenine. Is involved in the transfer of the threonylcarbamoyl moiety of threonylcarbamoyl-AMP (TC-AMP) to the N6 group of A37, together with TsaE and TsaB. TsaD likely plays a direct catalytic role in this reaction. The sequence is that of tRNA N6-adenosine threonylcarbamoyltransferase from Yersinia pseudotuberculosis serotype I (strain IP32953).